A 35-amino-acid polypeptide reads, in one-letter code: GPIQISYNYNYGPCGRYCGILGVSPGDNLDCGNQR.

It belongs to the glycosyl hydrolase 19 family. Chitinase class I subfamily.

It carries out the reaction Random endo-hydrolysis of N-acetyl-beta-D-glucosaminide (1-&gt;4)-beta-linkages in chitin and chitodextrins.. Its function is as follows. Defense against chitin-containing fungal pathogens. The polypeptide is Endochitinase 2 (Capsicum chinense (Scotch bonnet)).